Reading from the N-terminus, the 215-residue chain is Cytochrome b6 (215 aa).

Residues 32–52 (IFYCLGGITLTCFLVQVATGF) traverse the membrane as a helical segment. Cys35 contacts heme c. 2 residues coordinate heme b: His86 and His100. 3 helical membrane passes run 90-110 (ASMMVLMMILHVFRVYLTGGF), 116-136 (LTWVTGVVLGVLTASFGVTGY), and 186-206 (LHTFVLPLLTAVFMLMHFSMI). Residues His187 and His202 each contribute to the heme b site.

It belongs to the cytochrome b family. PetB subfamily. In terms of assembly, the 4 large subunits of the cytochrome b6-f complex are cytochrome b6, subunit IV (17 kDa polypeptide, PetD), cytochrome f and the Rieske protein, while the 4 small subunits are PetG, PetL, PetM and PetN. The complex functions as a dimer. Requires heme b as cofactor. Heme c serves as cofactor.

The protein resides in the plastid. Its subcellular location is the chloroplast thylakoid membrane. Its function is as follows. Component of the cytochrome b6-f complex, which mediates electron transfer between photosystem II (PSII) and photosystem I (PSI), cyclic electron flow around PSI, and state transitions. The chain is Cytochrome b6 from Lotus japonicus (Lotus corniculatus var. japonicus).